We begin with the raw amino-acid sequence, 280 residues long: Large ribosomal subunit protein uL2 (280 aa).

Disordered regions lie at residues 1-58 and 226-280; these read MAIR…GGGH and MNPV…KHGR. Composition is skewed to basic residues over residues 37 to 58 and 268 to 280; these read LHGH…GGGH and IVRR…KHGR.

This sequence belongs to the universal ribosomal protein uL2 family. In terms of assembly, part of the 50S ribosomal subunit. Forms a bridge to the 30S subunit in the 70S ribosome.

Its function is as follows. One of the primary rRNA binding proteins. Required for association of the 30S and 50S subunits to form the 70S ribosome, for tRNA binding and peptide bond formation. It has been suggested to have peptidyltransferase activity; this is somewhat controversial. Makes several contacts with the 16S rRNA in the 70S ribosome. The chain is Large ribosomal subunit protein uL2 from Mycobacterium avium (strain 104).